The chain runs to 356 residues: MALVSGALSTNRLRNYCVFGAVQPFDNCRAYGSPCSPDSTNNDGWFICDYHSSIRFKIEKMVLPIPDAEGNIYNRTVGKSLVNHKTLGAARVLIPTRDNYKTVLNLNSMSLAEQLVTHMIYDNVEAQGAVCKALQHNENFQTETYRLAEDMFNRTSAILAMTNPRRYCSQVNSNYARIWTTDDVNVAGNVFESMPPFLKNLINVAVAPEQIMIDEKTLVIRNCPTCNIDDSGLVANVQLYNPVVPRYRSTFNENVLHVENVLKFKGNANALQKSLSRYEPYPIVVPLMLGTQTLNTSSAYKQFTVPTRDDFAALNQRTGAAAAAPPAPAAAPAGPRPAAELEYDETLDRFARWRAR.

It belongs to the baculoviridae p39 family.

The protein resides in the virion. The protein is Major capsid protein (P39) of Lepidoptera (butterflies and moths).